Consider the following 272-residue polypeptide: uncharacterized protein (272 aa).

Catalysis depends on residues Asp-71 and Glu-163.

It belongs to the glycosyl hydrolase 25 family.

This is an uncharacterized protein from Escherichia coli (strain K12).